A 185-amino-acid chain; its full sequence is uncharacterized protein (185 aa).

It to M.thermoautotrophicum MTH236.

This is an uncharacterized protein from Methanocaldococcus jannaschii (strain ATCC 43067 / DSM 2661 / JAL-1 / JCM 10045 / NBRC 100440) (Methanococcus jannaschii).